A 177-amino-acid chain; its full sequence is Bifunctional protein PyrR (177 aa).

Positions 99-111 (VVLVDDVLFTGRT) match the PRPP-binding motif.

This sequence belongs to the purine/pyrimidine phosphoribosyltransferase family. PyrR subfamily.

It carries out the reaction UMP + diphosphate = 5-phospho-alpha-D-ribose 1-diphosphate + uracil. Its function is as follows. Regulates the transcription of the pyrimidine nucleotide (pyr) operon in response to exogenous pyrimidines. In terms of biological role, also displays a weak uracil phosphoribosyltransferase activity which is not physiologically significant. This Geobacter sp. (strain M21) protein is Bifunctional protein PyrR.